A 408-amino-acid polypeptide reads, in one-letter code: MDRVFINLHLVSMVNKQQTGSDGYQVVKDVMIGVRNGKVEYVGEPCPSILHGHPDIIDCAHALVTPGFIDCHTHLIFAGNRANEFEQRLQGIPYEEIAKQGGGILSTVQATREASEDELYHLAVHRLEGLKRDGVTTIEIKSGYGLTLDDEIKMLKVVKRISELPDMKVSSTLLAAHAVPPEYKNRSDEYIDLICDTIIPQVVKLNLANHVDVFCEGIGFSTKQCERVFRTALKHGLRIKGHTEQLSNLGGSALAAAMGADSVDHIEYLDEHGVKALTKNNTVATLLPGAFYFLKETKLPPIALLRQYEVPMAIATDFNPGTSPIASLRTIMNMACTLFKLTPEESLRGVTCHAAQALGLQNFRGKIAVGMEADFAIWQLESPAELSYRLGVPDLIARVVDGEIFHEK.

Fe(3+) is bound by residues His-72 and His-74. His-72 and His-74 together coordinate Zn(2+). Residues Arg-81, Tyr-144, and His-177 each contribute to the 4-imidazolone-5-propanoate site. An N-formimidoyl-L-glutamate-binding site is contributed by Tyr-144. His-242 contacts Fe(3+). Residue His-242 coordinates Zn(2+). Position 245 (Gln-245) interacts with 4-imidazolone-5-propanoate. Residue Asp-317 participates in Fe(3+) binding. Residue Asp-317 participates in Zn(2+) binding. Residues Asn-319 and Gly-321 each coordinate N-formimidoyl-L-glutamate. A 4-imidazolone-5-propanoate-binding site is contributed by Thr-322.

The protein belongs to the metallo-dependent hydrolases superfamily. HutI family. Zn(2+) is required as a cofactor. Requires Fe(3+) as cofactor.

It localises to the cytoplasm. The enzyme catalyses 4-imidazolone-5-propanoate + H2O = N-formimidoyl-L-glutamate. It functions in the pathway amino-acid degradation; L-histidine degradation into L-glutamate; N-formimidoyl-L-glutamate from L-histidine: step 3/3. Functionally, catalyzes the hydrolytic cleavage of the carbon-nitrogen bond in imidazolone-5-propanoate to yield N-formimidoyl-L-glutamate. It is the third step in the universal histidine degradation pathway. In Aliivibrio fischeri (strain MJ11) (Vibrio fischeri), this protein is Imidazolonepropionase.